Here is a 170-residue protein sequence, read N- to C-terminus: Adenine phosphoribosyltransferase (170 aa).

This sequence belongs to the purine/pyrimidine phosphoribosyltransferase family. Homodimer.

Its subcellular location is the cytoplasm. It catalyses the reaction AMP + diphosphate = 5-phospho-alpha-D-ribose 1-diphosphate + adenine. It participates in purine metabolism; AMP biosynthesis via salvage pathway; AMP from adenine: step 1/1. Catalyzes a salvage reaction resulting in the formation of AMP, that is energically less costly than de novo synthesis. The sequence is that of Adenine phosphoribosyltransferase from Cyanothece sp. (strain PCC 7425 / ATCC 29141).